The chain runs to 290 residues: Programmed cell death 1 ligand 1 (290 aa).

The signal sequence occupies residues 1–18 (MRIFAGIIFTACCHLLRA). Residues 19–127 (FTITAPKDLY…YGGADYKRIT (109 aa)) form the Ig-like V-type domain. Residues 19–239 (FTITAPKDLY…ATHPPQNRTH (221 aa)) lie on the Extracellular side of the membrane. Residue Asn35 is glycosylated (N-linked (GlcNAc...) asparagine). Disulfide bonds link Cys40–Cys114 and Cys154–Cys208. Residues 133 to 224 (PYRKINQRIS…PGQNHTAELI (92 aa)) form the Ig-like C2-type domain. Residues Asn191, Asn199, Asn218, and Asn236 are each glycosylated (N-linked (GlcNAc...) asparagine). The helical transmembrane segment at 240–260 (WVLLGSILLFLIVVSTVLLFL) threads the bilayer. Topologically, residues 261-290 (RKQVRMLDVEKCGVEDTSSKNRNDTQFEET) are cytoplasmic.

The protein belongs to the immunoglobulin superfamily. BTN/MOG family. Interacts with PDCD1. Interacts with CMTM4 and CMTM6. Interacts with CD80. Post-translationally, ubiquitinated; STUB1 likely mediates polyubiquitination of PD-L1/CD274 triggering its degradation. Ubiquitinated by MARCHF8; leading to degradation. Deubiquitinated by USP22; leading to stabilization. As to expression, highly expressed in the heart, thymus, skeletal muscle, and lung. Weakly expressed in the kidney, spleen, thyroid, and liver. Expressed on activated dendritic cells, B-cells and macrophages. Expressed in numerous tumor cells lines of lymphoid origin.

The protein resides in the cell membrane. It localises to the early endosome membrane. The protein localises to the recycling endosome membrane. Functionally, plays a critical role in induction and maintenance of immune tolerance to self. As a ligand for the inhibitory receptor PDCD1/PD-1, modulates the activation threshold of T-cells and limits T-cell effector response. Through a yet unknown activating receptor, may costimulate T-cell subsets that predominantly produce interleukin-10 (IL10). In terms of biological role, the PDCD1-mediated inhibitory pathway is exploited by tumors to attenuate anti-tumor immunity and escape destruction by the immune system, thereby facilitating tumor survival. The interaction with PDCD1/PD-1 inhibits cytotoxic T lymphocytes (CTLs) effector function. The blockage of the PDCD1-mediated pathway results in the reversal of the exhausted T-cell phenotype and the normalization of the anti-tumor response, providing a rationale for cancer immunotherapy. The polypeptide is Programmed cell death 1 ligand 1 (Cd274) (Mus musculus (Mouse)).